We begin with the raw amino-acid sequence, 343 residues long: Anthranilate phosphoribosyltransferase (343 aa).

5-phospho-alpha-D-ribose 1-diphosphate-binding positions include Gly84, Gly87–Asp88, Thr92, Asn94–Thr97, Lys112–Ser120, and Ser124. Position 84 (Gly84) interacts with anthranilate. Ser96 provides a ligand contact to Mg(2+). Residue Asn115 coordinates anthranilate. Residue Arg170 participates in anthranilate binding. Positions 229 and 230 each coordinate Mg(2+).

The protein belongs to the anthranilate phosphoribosyltransferase family. In terms of assembly, homodimer. Mg(2+) is required as a cofactor.

The enzyme catalyses N-(5-phospho-beta-D-ribosyl)anthranilate + diphosphate = 5-phospho-alpha-D-ribose 1-diphosphate + anthranilate. It participates in amino-acid biosynthesis; L-tryptophan biosynthesis; L-tryptophan from chorismate: step 2/5. Functionally, catalyzes the transfer of the phosphoribosyl group of 5-phosphorylribose-1-pyrophosphate (PRPP) to anthranilate to yield N-(5'-phosphoribosyl)-anthranilate (PRA). This chain is Anthranilate phosphoribosyltransferase, found in Burkholderia vietnamiensis (strain G4 / LMG 22486) (Burkholderia cepacia (strain R1808)).